The primary structure comprises 431 residues: 3-phosphoshikimate 1-carboxyvinyltransferase (431 aa).

3-phosphoshikimate contacts are provided by lysine 21, serine 22, and arginine 26. Residue lysine 21 coordinates phosphoenolpyruvate. Phosphoenolpyruvate is bound by residues glycine 94 and arginine 122. Serine 167, glutamine 169, aspartate 315, and lysine 342 together coordinate 3-phosphoshikimate. Glutamine 169 lines the phosphoenolpyruvate pocket. Aspartate 315 acts as the Proton acceptor in catalysis. 2 residues coordinate phosphoenolpyruvate: arginine 346 and arginine 388.

It belongs to the EPSP synthase family. Monomer.

The protein resides in the cytoplasm. It carries out the reaction 3-phosphoshikimate + phosphoenolpyruvate = 5-O-(1-carboxyvinyl)-3-phosphoshikimate + phosphate. The protein operates within metabolic intermediate biosynthesis; chorismate biosynthesis; chorismate from D-erythrose 4-phosphate and phosphoenolpyruvate: step 6/7. Its function is as follows. Catalyzes the transfer of the enolpyruvyl moiety of phosphoenolpyruvate (PEP) to the 5-hydroxyl of shikimate-3-phosphate (S3P) to produce enolpyruvyl shikimate-3-phosphate and inorganic phosphate. The chain is 3-phosphoshikimate 1-carboxyvinyltransferase from Pelotomaculum thermopropionicum (strain DSM 13744 / JCM 10971 / SI).